The sequence spans 269 residues: GTP cyclohydrolase FolE2 (269 aa).

This sequence belongs to the GTP cyclohydrolase IV family.

It carries out the reaction GTP + H2O = 7,8-dihydroneopterin 3'-triphosphate + formate + H(+). It participates in cofactor biosynthesis; 7,8-dihydroneopterin triphosphate biosynthesis; 7,8-dihydroneopterin triphosphate from GTP: step 1/1. Its function is as follows. Converts GTP to 7,8-dihydroneopterin triphosphate. The chain is GTP cyclohydrolase FolE2 from Azoarcus sp. (strain BH72).